The sequence spans 84 residues: Cell division topological specificity factor (84 aa).

Belongs to the MinE family.

In terms of biological role, prevents the cell division inhibition by proteins MinC and MinD at internal division sites while permitting inhibition at polar sites. This ensures cell division at the proper site by restricting the formation of a division septum at the midpoint of the long axis of the cell. In Pseudomonas putida (strain ATCC 700007 / DSM 6899 / JCM 31910 / BCRC 17059 / LMG 24140 / F1), this protein is Cell division topological specificity factor.